We begin with the raw amino-acid sequence, 402 residues long: Zinc finger protein 322 (402 aa).

Residues 43–65 (YQCLECKQNFCENLALIMCERTH) form a C2H2-type 1; atypical zinc finger. C2H2-type zinc fingers lie at residues 71 to 93 (YKCDMCEKTFVQSSDLTSHQRIH), 99 to 121 (YKCSKCEKSFWHHLALSGHQRTH), 127 to 149 (YTCDICGKNFGQSSDLLVHQRSH), 155 to 177 (YLCSECDKCFSRSTNLIRHRRTH), 183 to 205 (FKCLECEKAFSGKSDLISHQRTH), 211 to 233 (YKCNKCEKSYRHRSAFIVHKRVH), 239 to 261 (YKCGACEKCFGQKSDLIVHQRVH), and 267 to 289 (YKCLECMRSFTRSANLIRHQATH). The segment at 293 to 315 (FKCLEYEKSFNCSSDLIVHQRIH) adopts a C2H2-type 10; degenerate zinc-finger fold. The C2H2-type 11; degenerate zinc finger occupies 351-373 (YKYTVCDKSFHQSSALLQHQTVH). At serine 391 the chain carries Phosphoserine.

The protein belongs to the krueppel C2H2-type zinc-finger protein family. As to quaternary structure, interacts with POU5F1. As to expression, ubiquitous. Highly expressed in heart and skeletal muscle.

It localises to the cytoplasm. The protein resides in the nucleus. In terms of biological role, transcriptional activator. Important for maintenance of pluripotency in embryonic stem cells. Binds directly to the POU5F1 distal enhancer and the NANOG proximal promoter, and enhances expression of both genes. Can also bind to numerous other gene promoters and regulates expression of many other pluripotency factors, either directly or indirectly. Promotes inhibition of MAPK signaling during embryonic stem cell differentiation. This Homo sapiens (Human) protein is Zinc finger protein 322 (ZNF322).